Here is a 38-residue protein sequence, read N- to C-terminus: Histone H5 (38 aa).

Positions 1 to 15 (TESPIPVPAPAPAAK) are enriched in pro residues. The disordered stretch occupies residues 1 to 38 (TESPIPVPAPAPAAKPKPKRVSKRPASHPPYSDMIAAA). The span at 16–26 (PKPKRVSKRPA) shows a compositional bias: basic residues.

Belongs to the histone H1/H5 family. Erythroid cells.

Its subcellular location is the nucleus. It localises to the chromosome. Histone H5 performs the same function as H1, being necessary for the condensation of nucleosome chains into higher order structures, and replaces histone H1 in certain cells. The polypeptide is Histone H5 (Columba livia (Rock dove)).